The chain runs to 205 residues: Putative 3-methyladenine DNA glycosylase (205 aa).

Belongs to the DNA glycosylase MPG family.

This chain is Putative 3-methyladenine DNA glycosylase, found in Clostridium perfringens (strain 13 / Type A).